A 485-amino-acid chain; its full sequence is Glycogen synthase (485 aa).

K15 is a binding site for ADP-alpha-D-glucose.

It belongs to the glycosyltransferase 1 family. Bacterial/plant glycogen synthase subfamily.

It carries out the reaction [(1-&gt;4)-alpha-D-glucosyl](n) + ADP-alpha-D-glucose = [(1-&gt;4)-alpha-D-glucosyl](n+1) + ADP + H(+). It functions in the pathway glycan biosynthesis; glycogen biosynthesis. Synthesizes alpha-1,4-glucan chains using ADP-glucose. The polypeptide is Glycogen synthase (Geobacillus thermodenitrificans (strain NG80-2)).